The primary structure comprises 570 residues: Adenine deaminase (570 aa).

The protein belongs to the metallo-dependent hydrolases superfamily. Adenine deaminase family. It depends on Mn(2+) as a cofactor.

It carries out the reaction adenine + H2O + H(+) = hypoxanthine + NH4(+). The sequence is that of Adenine deaminase from Clostridium acetobutylicum (strain ATCC 824 / DSM 792 / JCM 1419 / IAM 19013 / LMG 5710 / NBRC 13948 / NRRL B-527 / VKM B-1787 / 2291 / W).